The primary structure comprises 651 residues: Acetyl-coenzyme A synthetase (651 aa).

Residues 189-192, threonine 311, and asparagine 335 each bind CoA; that span reads RGGK. Residues 387–389, 411–416, aspartate 500, and arginine 515 each bind ATP; these read GEP and DTWWQT. Position 523 (serine 523) interacts with CoA. Arginine 526 lines the ATP pocket. Mg(2+)-binding residues include valine 537, histidine 539, and valine 542. Arginine 584 serves as a coordination point for CoA. Lysine 609 carries the post-translational modification N6-acetyllysine.

Belongs to the ATP-dependent AMP-binding enzyme family. Mg(2+) serves as cofactor. In terms of processing, acetylated. Deacetylation by the SIR2-homolog deacetylase activates the enzyme.

It catalyses the reaction acetate + ATP + CoA = acetyl-CoA + AMP + diphosphate. Catalyzes the conversion of acetate into acetyl-CoA (AcCoA), an essential intermediate at the junction of anabolic and catabolic pathways. AcsA undergoes a two-step reaction. In the first half reaction, AcsA combines acetate with ATP to form acetyl-adenylate (AcAMP) intermediate. In the second half reaction, it can then transfer the acetyl group from AcAMP to the sulfhydryl group of CoA, forming the product AcCoA. The sequence is that of Acetyl-coenzyme A synthetase from Agrobacterium fabrum (strain C58 / ATCC 33970) (Agrobacterium tumefaciens (strain C58)).